Consider the following 447-residue polypeptide: Tryptophan 5-hydroxylase 1 (447 aa).

One can recognise an ACT domain in the interval 22–97 (TLIFSLENEV…TVLSVDSPDQ (76 aa)). Phosphoserine; by PKA is present on S61. L-tryptophan is bound by residues Y238, R260, and T268. Positions 275, 280, and 320 each coordinate Fe cation. Positions 339 and 369 each coordinate L-tryptophan.

This sequence belongs to the biopterin-dependent aromatic amino acid hydroxylase family. Homotetramer. Interacts with DNAJC12. The cofactor is Fe(2+). Post-translationally, ubiquitinated, leading to its degradation by the proteasome. Ubiquitinated is triggered by phosphorylation. In terms of processing, phosphorylated; triggering degradation by the proteasome.

The catalysed reaction is (6R)-L-erythro-5,6,7,8-tetrahydrobiopterin + L-tryptophan + O2 = 5-hydroxy-L-tryptophan + (4aS,6R)-4a-hydroxy-L-erythro-5,6,7,8-tetrahydrobiopterin. The protein operates within aromatic compound metabolism; serotonin biosynthesis; serotonin from L-tryptophan: step 1/2. Oxidizes L-tryptophan to 5-hydroxy-l-tryptophan in the rate-determining step of serotonin biosynthesis. The protein is Tryptophan 5-hydroxylase 1 of Mus musculus (Mouse).